Consider the following 269-residue polypeptide: Regulating synaptic membrane exocytosis protein 4 (269 aa).

The region spanning 115 to 233 (PMGGVEIGLQ…DLTTLAVGWY (119 aa)) is the C2 domain. A phosphoserine mark is found at Ser-254 and Ser-257.

In terms of assembly, binds PPFIA3. Brain specific.

The protein localises to the synapse. Regulates synaptic membrane exocytosis. This is Regulating synaptic membrane exocytosis protein 4 (Rims4) from Rattus norvegicus (Rat).